We begin with the raw amino-acid sequence, 943 residues long: MLKLLLGDPNTRKLKRYQPIVEEINLLEEEVSILTDDELRNETHNLKSKVSLEINIKRQNEKLEEILPKAFAIVREASKRVLEMRHFDVQLIGGMVLHEGQIAEMKTGEGKTLVATLPCYLNALTGKGVHVVTVNDYLARRDAEWMGQVHRFLGLSVGLIQQDMSPAERKKNYACDITYATNSELGFDYLRDNMATEIEEVVQRKFNYCVIDEVDSILIDEARTPLIISGQIERPQEKYQKAAELALSLIKAKELSKDGIDPEGDYEVDEKQRSCILTDQGFAKCEESLKVNDLYDPQDPWAHYITNALKAKELFVKDVNYIIKKDEAVIVDEFTGRVMPGRRWSDGQHQAIEAKEGLKIQPETQTLASITYQNFFLLYPGLAGMTGTAKTEEVEFEKTYKLESTVVPTNQVRKRQDWADQVFKTEIGKWKAVANETAEIHRNGRPVLVGTTSVEKSELLSSLLFEQQIPHNLLNAKPENVEREAEIVAQAGRSGAVTIATNMAGRGTDIILGGNSDYMARLKLKETLMPLLVKPDNEHKPPIPQQRSSKAGGGFASKSESISNKNSKSSGASLFPCQLGEDTTRKLSLLSNELVKSWGERTLTILELDDRIATAAEKAPTEDKLIQSLRDALSDVKNEYEKVLVHEEENVRKAGGLHVIGTERHESRRVDNQLRGRAGRQGDLGSTRFFLSLEDNLLRIFGGDRVANLMNAFRVDEDMPIESGMLTRSLESAQKKVETYYYDIRKQVFEYDEVMNNQRKAVYNERLRVLKGSDLKKQVLGYGDRTMEEIVEAYINPDLPPEEWDIEQLISKVKEFIYLLNNLKSTDVSVLSVEELKNYLQEQLRIAYDLKEAQIEQFRPGLMREAERFFILQQIDNLWREHLQSMDSLRESVGLRGYGQKDPLIEYKNEGYDMFLEMMTNMRRNVIYSMFMFQPQSEKETKS.

ATP-binding positions include Gln90, 108–112 (GEGKT), and Asp509. Residues 534–576 (KPDNEHKPPIPQQRSSKAGGGFASKSESISNKNSKSSGASLFP) form a disordered region. The span at 556–570 (ASKSESISNKNSKSS) shows a compositional bias: low complexity.

Belongs to the SecA family. Monomer and homodimer. Part of the essential Sec protein translocation apparatus which comprises SecA, SecYEG and auxiliary proteins SecDF. Other proteins may also be involved.

The protein localises to the cell inner membrane. Its subcellular location is the cellular thylakoid membrane. The protein resides in the cytoplasm. It catalyses the reaction ATP + H2O + cellular proteinSide 1 = ADP + phosphate + cellular proteinSide 2.. Functionally, part of the Sec protein translocase complex. Interacts with the SecYEG preprotein conducting channel. Has a central role in coupling the hydrolysis of ATP to the transfer of proteins into and across the cell membrane, serving as an ATP-driven molecular motor driving the stepwise translocation of polypeptide chains across the membrane. In terms of biological role, probably participates in protein translocation into and across both the cytoplasmic and thylakoid membranes in cyanobacterial cells. The sequence is that of Protein translocase subunit SecA from Prochlorococcus marinus (strain MIT 9515).